A 431-amino-acid chain; its full sequence is Serine--tRNA ligase (431 aa).

Positions 41–66 (QSRTQELQAERNARSKSIGEAARRGE) are disordered. Residue 240 to 242 (TSE) coordinates L-serine. 271–273 (RSE) provides a ligand contact to ATP. Glutamate 294 provides a ligand contact to L-serine. 358-361 (EISS) serves as a coordination point for ATP. Residue serine 392 coordinates L-serine.

This sequence belongs to the class-II aminoacyl-tRNA synthetase family. Type-1 seryl-tRNA synthetase subfamily. As to quaternary structure, homodimer. The tRNA molecule binds across the dimer.

It is found in the cytoplasm. It carries out the reaction tRNA(Ser) + L-serine + ATP = L-seryl-tRNA(Ser) + AMP + diphosphate + H(+). The catalysed reaction is tRNA(Sec) + L-serine + ATP = L-seryl-tRNA(Sec) + AMP + diphosphate + H(+). It functions in the pathway aminoacyl-tRNA biosynthesis; selenocysteinyl-tRNA(Sec) biosynthesis; L-seryl-tRNA(Sec) from L-serine and tRNA(Sec): step 1/1. Catalyzes the attachment of serine to tRNA(Ser). Is also able to aminoacylate tRNA(Sec) with serine, to form the misacylated tRNA L-seryl-tRNA(Sec), which will be further converted into selenocysteinyl-tRNA(Sec). In Aeromonas salmonicida (strain A449), this protein is Serine--tRNA ligase.